Here is a 438-residue protein sequence, read N- to C-terminus: Gamma-glutamyl phosphate reductase (438 aa).

Belongs to the gamma-glutamyl phosphate reductase family.

The protein resides in the cytoplasm. The catalysed reaction is L-glutamate 5-semialdehyde + phosphate + NADP(+) = L-glutamyl 5-phosphate + NADPH + H(+). The protein operates within amino-acid biosynthesis; L-proline biosynthesis; L-glutamate 5-semialdehyde from L-glutamate: step 2/2. Its function is as follows. Catalyzes the NADPH-dependent reduction of L-glutamate 5-phosphate into L-glutamate 5-semialdehyde and phosphate. The product spontaneously undergoes cyclization to form 1-pyrroline-5-carboxylate. This is Gamma-glutamyl phosphate reductase from Prochlorococcus marinus (strain MIT 9313).